Consider the following 914-residue polypeptide: Isoleucine--tRNA ligase (914 aa).

Positions 64 to 74 match the 'HIGH' region motif; sequence PYANGNFHLGH. An L-isoleucyl-5'-AMP-binding site is contributed by Glu-557. Residues 598 to 602 carry the 'KMSKS' region motif; sequence PMSKS. Lys-601 is an ATP binding site. Zn(2+) is bound by residues Cys-889, Cys-892, Cys-906, and Cys-909.

Belongs to the class-I aminoacyl-tRNA synthetase family. IleS type 1 subfamily. In terms of assembly, monomer. Zn(2+) serves as cofactor.

Its subcellular location is the cytoplasm. It catalyses the reaction tRNA(Ile) + L-isoleucine + ATP = L-isoleucyl-tRNA(Ile) + AMP + diphosphate. Catalyzes the attachment of isoleucine to tRNA(Ile). As IleRS can inadvertently accommodate and process structurally similar amino acids such as valine, to avoid such errors it has two additional distinct tRNA(Ile)-dependent editing activities. One activity is designated as 'pretransfer' editing and involves the hydrolysis of activated Val-AMP. The other activity is designated 'posttransfer' editing and involves deacylation of mischarged Val-tRNA(Ile). The sequence is that of Isoleucine--tRNA ligase from Leptospira interrogans serogroup Icterohaemorrhagiae serovar copenhageni (strain Fiocruz L1-130).